The chain runs to 338 residues: MKSVAINGYGTIGKRVADAVAAQDDMKVIGVSKTRPNYESRTAVEEKGYDLYIGIPERADQFKEAGIEIAGTVEDMIQEADVVVDCTPGTIGPQNLEMYKKAGVKAIYQGGEDHELTGLSFNAISNYDDSYGKDYTRVVSCNTTGLTRTLSTIDPIADIKKVRAVMVRRGSDPSEVKKGPINSIVPNPPKVPSHHGPDVKTVMEGIDVTTMALLVPTTLMHQHNIMVEINNEVETQEIIDALEKRSRVLVVDASEGLGSTAELMEYAKELGRNRNDLYEIPVWRESINVVGNELYYMQAVHQESDVVPENIDAIRALLEMESDNEKSIAKTNKAMGIL.

NAD(+) contacts are provided by residues 11–12 (TI) and Gly-111. 140 to 142 (SCN) lines the D-glyceraldehyde 3-phosphate pocket. The Nucleophile role is filled by Cys-141. Arg-169 provides a ligand contact to NAD(+). The tract at residues 170-195 (GSDPSEVKKGPINSIVPNPPKVPSHH) is disordered. 195 to 196 (HG) lines the D-glyceraldehyde 3-phosphate pocket. Gln-302 contributes to the NAD(+) binding site.

It belongs to the glyceraldehyde-3-phosphate dehydrogenase family. Homotetramer.

The protein localises to the cytoplasm. It carries out the reaction D-glyceraldehyde 3-phosphate + phosphate + NADP(+) = (2R)-3-phospho-glyceroyl phosphate + NADPH + H(+). The catalysed reaction is D-glyceraldehyde 3-phosphate + phosphate + NAD(+) = (2R)-3-phospho-glyceroyl phosphate + NADH + H(+). It participates in carbohydrate degradation; glycolysis; pyruvate from D-glyceraldehyde 3-phosphate: step 1/5. This is Glyceraldehyde-3-phosphate dehydrogenase from Methanobrevibacter smithii (strain ATCC 35061 / DSM 861 / OCM 144 / PS).